Consider the following 192-residue polypeptide: Molybdenum cofactor guanylyltransferase (192 aa).

GTP contacts are provided by residues 10–12 (LAG), lysine 23, asparagine 51, aspartate 69, and aspartate 99. Residue aspartate 99 participates in Mg(2+) binding.

It belongs to the MobA family. In terms of assembly, monomer. The cofactor is Mg(2+).

It is found in the cytoplasm. The enzyme catalyses Mo-molybdopterin + GTP + H(+) = Mo-molybdopterin guanine dinucleotide + diphosphate. Transfers a GMP moiety from GTP to Mo-molybdopterin (Mo-MPT) cofactor (Moco or molybdenum cofactor) to form Mo-molybdopterin guanine dinucleotide (Mo-MGD) cofactor. The sequence is that of Molybdenum cofactor guanylyltransferase from Haemophilus influenzae (strain 86-028NP).